We begin with the raw amino-acid sequence, 250 residues long: 5-oxoprolinase subunit A (250 aa).

Belongs to the LamB/PxpA family. As to quaternary structure, forms a complex composed of PxpA, PxpB and PxpC.

The catalysed reaction is 5-oxo-L-proline + ATP + 2 H2O = L-glutamate + ADP + phosphate + H(+). In terms of biological role, catalyzes the cleavage of 5-oxoproline to form L-glutamate coupled to the hydrolysis of ATP to ADP and inorganic phosphate. The protein is 5-oxoprolinase subunit A of Streptomyces avermitilis (strain ATCC 31267 / DSM 46492 / JCM 5070 / NBRC 14893 / NCIMB 12804 / NRRL 8165 / MA-4680).